The sequence spans 107 residues: Frataxin (107 aa).

Belongs to the frataxin family. As to quaternary structure, monomer.

The protein resides in the cytoplasm. Promotes the assembly and repair of iron-sulfur clusters by delivering Fe(2+) to proteins involved in these pathways. The polypeptide is Frataxin (YFH1) (Trachipleistophora hominis (Microsporidian parasite)).